A 375-amino-acid chain; its full sequence is Filamin-binding LIM protein 1 (375 aa).

The filamin-binding stretch occupies residues 1–69 (MASKPEKRVA…KTWTPSGKTN (69 aa)). The tract at residues 40–176 (ARPWEMLPTK…PPPEEPVTLP (137 aa)) is disordered. The segment covering 60–83 (KTWTPSGKTNASLSGVTPQLSNGG) has biased composition (polar residues). 2 stretches are compositionally biased toward pro residues: residues 98-107 (LPPPPPPPSA) and 133-144 (LPPPPPPPPPQA). 3 consecutive LIM zinc-binding domains span residues 183–244 (DVCG…TLEK), 245–302 (CGKC…RKFA), and 303–372 (PVCS…RSAA). The tract at residues 278–375 (ISDESFALDS…HLKRSAAGCC (98 aa)) is FERMT2-binding.

As to quaternary structure, interacts with FERMT2, FLNA, FLNB and FLNC. Interacts with NKX2-5.

The protein resides in the cell junction. It is found in the focal adhesion. Its subcellular location is the cytoplasm. It localises to the cytoskeleton. The protein localises to the stress fiber. Its function is as follows. Serves as an anchoring site for cell-ECM adhesion proteins and filamin-containing actin filaments. Is implicated in cell shape modulation (spreading) and motility. May participate in the regulation of filamin-mediated cross-linking and stabilization of actin filaments. May also regulate the assembly of filamin-containing signaling complexes that control actin assembly. Promotes dissociation of FLNA from ITGB3 and ITGB7. Promotes activation of integrins and regulates integrin-mediated cell-cell adhesion. The polypeptide is Filamin-binding LIM protein 1 (Fblim1) (Mus musculus (Mouse)).